A 309-amino-acid polypeptide reads, in one-letter code: Vomeronasal type-1 receptor 46 (309 aa).

The Extracellular segment spans residues M1 to E20. A helical transmembrane segment spans residues V21–G41. Over E42–L50 the chain is Cytoplasmic. A helical membrane pass occupies residues Y51–V71. Topologically, residues D72–C85 are extracellular. Residues C85 and C171 are joined by a disulfide bond. Residues T86 to L106 traverse the membrane as a helical segment. Residues N107–G134 are Cytoplasmic-facing. A helical transmembrane segment spans residues A135–A155. Residues S156–E192 are Extracellular-facing. N158 carries an N-linked (GlcNAc...) asparagine glycan. The helical transmembrane segment at A193 to H213 threads the bilayer. The Cytoplasmic portion of the chain corresponds to K214–R237. The helical transmembrane segment at T238–Y258 threads the bilayer. Over S259 to S267 the chain is Extracellular. A helical transmembrane segment spans residues I268–F288. The Cytoplasmic segment spans residues I289 to I309.

It belongs to the G-protein coupled receptor 1 family.

It is found in the cell membrane. Its function is as follows. Putative pheromone receptor implicated in the regulation of social and reproductive behavior. The sequence is that of Vomeronasal type-1 receptor 46 (Vmn1r46) from Mus musculus (Mouse).